The following is a 547-amino-acid chain: Chaperonin GroEL (547 aa).

ATP is bound by residues 30–33 (TLGP), Lys51, 87–91 (DGTTT), Gly415, 479–481 (NAA), and Asp495.

Belongs to the chaperonin (HSP60) family. In terms of assembly, forms a cylinder of 14 subunits composed of two heptameric rings stacked back-to-back. Interacts with the co-chaperonin GroES.

It is found in the cytoplasm. It carries out the reaction ATP + H2O + a folded polypeptide = ADP + phosphate + an unfolded polypeptide.. Its function is as follows. Together with its co-chaperonin GroES, plays an essential role in assisting protein folding. The GroEL-GroES system forms a nano-cage that allows encapsulation of the non-native substrate proteins and provides a physical environment optimized to promote and accelerate protein folding. The chain is Chaperonin GroEL from Cupriavidus taiwanensis (strain DSM 17343 / BCRC 17206 / CCUG 44338 / CIP 107171 / LMG 19424 / R1) (Ralstonia taiwanensis (strain LMG 19424)).